Reading from the N-terminus, the 276-residue chain is uncharacterized protein (276 aa).

This is an uncharacterized protein from Fowl adenovirus A serotype 1 (strain CELO / Phelps) (FAdV-1).